The sequence spans 395 residues: Polar tube protein 1 (395 aa).

The N-terminal stretch at 1–22 (MKGISKILSASIALMKLENVYS) is a signal peptide. 2 disordered regions span residues 59–95 (CASG…APAE) and 111–133 (PGTT…QQPL). A compositionally biased stretch (low complexity) spans 68-80 (SPSPAAPTSPVTP). The segment covering 81–91 (GKTSENETSPS) has biased composition (polar residues). The N-linked (GlcNAc...) asparagine glycan is linked to asparagine 86. Positions 111-128 (PGTTSGTTPGSGPCETPE) are enriched in low complexity. An N-linked (GlcNAc...) asparagine glycan is attached at asparagine 173. 4 consecutive repeat copies span residues 179-204 (PGQQ…MPST), 205-230 (PGQQ…TPST), 231-256 (PGQQ…TPST), and 257-282 (PGQQ…MPGT). The tract at residues 179-282 (PGQQQILSGT…LCQDQGMPGT (104 aa)) is 4 X 26 AA approximate tandem repeats. A disordered region spans residues 277 to 300 (QGMPGTSGVPGQQGQSSGQCCAPQ). Positions 280-300 (PGTSGVPGQQGQSSGQCCAPQ) are enriched in low complexity. N-linked (GlcNAc...) asparagine glycosylation is present at asparagine 311.

Interacts with PTP2 and PTP3.

Its subcellular location is the spore polar tube. Its function is as follows. Involved with PTP2 and PTP3 in the formation of the polar tube through which the infectious agent is passed on to the host cell. Accounts for at least 70 percent of the mass of the polar tube. The polypeptide is Polar tube protein 1 (PTP1) (Encephalitozoon cuniculi (strain GB-M1) (Microsporidian parasite)).